The chain runs to 172 residues: Hemagglutinin/amebocyte aggregation factor (172 aa).

Positions 1-19 (MNSPAIVIIIFSTLTFSEA) are cleaved as a signal peptide. Tandem repeats lie at residues 21 to 25 (VNDWD), 50 to 54 (EDRRW), 73 to 77 (VNDWD), and 102 to 106 (EDRRW). Intrachain disulfides connect C32/C58, C67/C172, C84/C110, C111/C117, and C123/C167. 2 consecutive repeat copies span residues 129–133 (VNSWD) and 158–162 (EDRRW).

This sequence belongs to the dermatopontin family.

It localises to the secreted. Its function is as follows. Possesses the property of inducing both aggregation of amebocytes and agglutination of erythrocytes. This is Hemagglutinin/amebocyte aggregation factor from Limulus polyphemus (Atlantic horseshoe crab).